A 498-amino-acid chain; its full sequence is Putative F-box/FBD/LRR-repeat protein At4g03220 (498 aa).

Residues 23–71 (VDRISNLPDSLNHQILLLLPLKSAAQASLLSKRWRSLFLSLPDLDFTSI) form the F-box domain. 3 LRR repeats span residues 148–172 (SQNL…SSAR), 175–200 (FQKL…FFTD), and 235–259 (SLQL…CFYS). Residues 416–466 (YWESQAYELESFLNHLEFVEIHGFVECENEMSLAIFLLRHGKALIKMTLRS) enclose the FBD domain.

In Arabidopsis thaliana (Mouse-ear cress), this protein is Putative F-box/FBD/LRR-repeat protein At4g03220.